Reading from the N-terminus, the 418-residue chain is Beta-2 adrenergic receptor (418 aa).

Residues 1 to 34 lie on the Extracellular side of the membrane; sequence MGQPGNRSVFLLAPNGSHAPDQDVPQERDEAWVV. N-linked (GlcNAc...) asparagine glycosylation is found at asparagine 6 and asparagine 15. A helical membrane pass occupies residues 35–58; it reads GMAIVMSLIVLAIVFGNVLVITAI. Residues 59–71 are Cytoplasmic-facing; sequence AKFERLQTVTNYF. Residues 72–95 traverse the membrane as a helical segment; sequence ITSLACADLVMGLAVVPFGASHIL. Over 96–106 the chain is Extracellular; it reads MKMWTFGSFWC. 2 disulfide bridges follow: cysteine 106–cysteine 191 and cysteine 184–cysteine 190. A helical transmembrane segment spans residues 107–129; the sequence is EFWISIDVLCVTASIETLCVIAV. Over 130 to 150 the chain is Cytoplasmic; that stretch reads DRYLAITSPFKYQCLLTKNKA. At tyrosine 141 the chain carries Phosphotyrosine. The chain crosses the membrane as a helical span at residues 151 to 174; that stretch reads RVVILMVWVVSGLISFLPIKMHWY. Residues 175–196 are Extracellular-facing; that stretch reads QATHREALNCYAEEACCDFFTN. The helical transmembrane segment at 197 to 220 threads the bilayer; the sequence is QPYAIASSIVSFYLPLVVMVFVYS. The Cytoplasmic portion of the chain corresponds to 221–274; that stretch reads RVFQVARRQLQKIDKSEGRFHAQNLSQAEQDGRSGPGHRRSSKFCLKEHKALKT. Residue serine 246 is modified to Phosphoserine. Phosphoserine; by PKA occurs at positions 261 and 262. A lipid anchor (S-palmitoyl cysteine) is attached at cysteine 265. A helical membrane pass occupies residues 275 to 298; that stretch reads LGIIMGTFTLCWLPFFIVNIVHGI. Over 299 to 305 the chain is Extracellular; the sequence is HDNLIPK. The chain crosses the membrane as a helical span at residues 306 to 329; it reads EVYILLNWVGYVNSAFNPLIYCRS. The Cytoplasmic segment spans residues 330–418; sequence PDFRMAFQEL…RNCSTNDSML (89 aa). A lipid anchor (S-palmitoyl cysteine) is attached at cysteine 341. Residues serine 345 and serine 346 each carry the phosphoserine; by PKA modification. Phosphoserine; by BARK is present on residues serine 355 and serine 356. Residues 381–418 are disordered; sequence RLCEDAPGPEGCAHRQGTVPDDSTDSQGRNCSTNDSML. 4-hydroxyproline is present on residues proline 387 and proline 400. Over residues 405–418 the composition is skewed to polar residues; the sequence is DSQGRNCSTNDSML. The short motif at 415–418 is the PDZ-binding element; sequence DSML.

It belongs to the G-protein coupled receptor 1 family. Adrenergic receptor subfamily. ADRB2 sub-subfamily. As to quaternary structure, binds NHERF1 and GPRASP1. Interacts with ARRB1 and ARRB2. Interacts with SRC. Interacts with USP20 and USP33. Interacts with VHL; the interaction, which is increased on hydroxylation of ADRB2, ubiquitinates ADRB2 leading to its degradation. Interacts with EGLN3; the interaction hydroxylates ADRB2 facilitating VHL-E3 ligase-mediated ubiquitination. Interacts (via PDZ-binding motif) with SNX27 (via PDZ domain); the interaction is required when endocytosed to prevent degradation in lysosomes and promote recycling to the plasma membrane. Interacts with CNIH4. Interacts with ARRDC3. Interacts with NEDD4. Interacts with MARCHF2. Post-translationally, palmitoylated; may reduce accessibility of Ser-345 and Ser-346 by anchoring Cys-341 to the plasma membrane. Agonist stimulation promotes depalmitoylation and further allows Ser-345 and Ser-346 phosphorylation. In terms of processing, phosphorylated by PKA and BARK upon agonist stimulation, which mediates homologous desensitization of the receptor. PKA-mediated phosphorylation seems to facilitate phosphorylation by BARK. Phosphorylation of Tyr-141 is induced by insulin and leads to supersensitization of the receptor. Post-translationally, polyubiquitinated. Agonist-induced ubiquitination leads to sort internalized receptors to the lysosomes for degradation. Deubiquitination by USP20 and USP33, leads to ADRB2 recycling and resensitization after prolonged agonist stimulation. USP20 and USP33 are constitutively associated and are dissociated immediately after agonist stimulation. Ubiquitination by the VHL-E3 ligase complex is oxygen-dependent. In terms of processing, hydroxylation by EGLN3 occurs only under normoxia and increases the interaction with VHL and the subsequent ubiquitination and degradation of ADRB2. Palmitoylated. Mainly palmitoylated at Cys-341. Palmitoylation may reduce accessibility of phosphorylation sites by anchoring the receptor to the plasma membrane. Agonist stimulation promotes depalmitoylation and further allows Ser-345 and Ser-346 phosphorylation. Also undergoes transient, ligand-induced palmitoylation at Cys-265 probably by ZDHHC9, ZDHHC14 and ZDHHC18 within the Golgi. Palmitoylation at Cys-265 requires phosphorylation by PKA and receptor internalization and stabilizes the receptor. Could be depalmitoylated by LYPLA1 at the plasma membrane. In terms of tissue distribution, expressed in heart, liver, lung, skeletal muscle and subcutaneous adipose tissue.

The protein localises to the cell membrane. Its subcellular location is the early endosome. It is found in the golgi apparatus. Its function is as follows. Beta-adrenergic receptors mediate the catecholamine-induced activation of adenylate cyclase through the action of G proteins. The beta-2-adrenergic receptor binds epinephrine with an approximately 30-fold greater affinity than it does norepinephrine. This Sus scrofa (Pig) protein is Beta-2 adrenergic receptor (ADRB2).